We begin with the raw amino-acid sequence, 573 residues long: Oxygen sensor histidine kinase response regulator DosT (573 aa).

2 GAF domains span residues 61–198 and 229–366; these read KLDA…GIAV and DPAM…ALAW. His-147 contributes to the heme binding site. One can recognise a Histidine kinase domain in the interval 380–573; sequence ILTDRDRIAR…TLLRWSAPLR (194 aa). His-392 is subject to Phosphohistidine; by autocatalysis.

Mg(2+) serves as cofactor. Heme is required as a cofactor.

It localises to the cytoplasm. Functionally, interacts with the two-component regulatory system DevR/DevS (DosR/DosS) involved in onset of the dormancy response. Required for full induction of the DevR (DosR) regulon; required during early adaptation to anaerobiosis, to start induction of the DevR regulon. May act as a direct hypoxia/oxygen sensor. May be the secondary sensor for CO. Donates a phosphate group to DevR (DosR). The chain is Oxygen sensor histidine kinase response regulator DosT (dosT) from Mycobacterium tuberculosis (strain CDC 1551 / Oshkosh).